Here is a 900-residue protein sequence, read N- to C-terminus: Protein translocase subunit SecA (900 aa).

Residues Gln-87, 105–109 (GEGKT), and Asp-510 each bind ATP. A disordered region spans residues 857 to 890 (DSLDSLSDGGSDSADGQEYPKVGRNEPCPCGSGK). Residues 860-872 (DSLSDGGSDSADG) are compositionally biased toward low complexity. Positions 884, 886, 895, and 896 each coordinate Zn(2+).

The protein belongs to the SecA family. In terms of assembly, monomer and homodimer. Part of the essential Sec protein translocation apparatus which comprises SecA, SecYEG and auxiliary proteins SecDF-YajC and YidC. The cofactor is Zn(2+).

It localises to the cell inner membrane. Its subcellular location is the cytoplasm. It catalyses the reaction ATP + H2O + cellular proteinSide 1 = ADP + phosphate + cellular proteinSide 2.. Part of the Sec protein translocase complex. Interacts with the SecYEG preprotein conducting channel. Has a central role in coupling the hydrolysis of ATP to the transfer of proteins into and across the cell membrane, serving both as a receptor for the preprotein-SecB complex and as an ATP-driven molecular motor driving the stepwise translocation of polypeptide chains across the membrane. In Marinomonas sp. (strain MWYL1), this protein is Protein translocase subunit SecA.